Consider the following 143-residue polypeptide: MRVLVQRVSSAAVRVDGRVVGAIRPDGQGLVAFVGVTHGDDLDKARRLAEKLWNLRVLADEKSASDMHAPILVISQFTLYADTAKGRRPSWNAAAPGAVAQPLIAAFAAALRQLGAHVEAGVFGAHMQVELVNDGPVTVMLEG.

Residues 135–136 (GP) carry the Gly-cisPro motif, important for rejection of L-amino acids motif.

It belongs to the DTD family. Homodimer.

It is found in the cytoplasm. The enzyme catalyses glycyl-tRNA(Ala) + H2O = tRNA(Ala) + glycine + H(+). It carries out the reaction a D-aminoacyl-tRNA + H2O = a tRNA + a D-alpha-amino acid + H(+). In terms of biological role, an aminoacyl-tRNA editing enzyme that deacylates mischarged D-aminoacyl-tRNAs. Also deacylates mischarged glycyl-tRNA(Ala), protecting cells against glycine mischarging by AlaRS. Acts via tRNA-based rather than protein-based catalysis; rejects L-amino acids rather than detecting D-amino acids in the active site. By recycling D-aminoacyl-tRNA to D-amino acids and free tRNA molecules, this enzyme counteracts the toxicity associated with the formation of D-aminoacyl-tRNA entities in vivo and helps enforce protein L-homochirality. The chain is D-aminoacyl-tRNA deacylase from Mycobacterium bovis (strain ATCC BAA-935 / AF2122/97).